The primary structure comprises 290 residues: ADP-dependent (S)-NAD(P)H-hydrate dehydratase (290 aa).

The region spanning 5-278 (NQTLLEKVII…RYLPKIMKII (274 aa)) is the YjeF C-terminal domain. Residues Ala-40, Gly-103, and His-152 each coordinate (6S)-NADPHX. Gly-218 is an AMP binding site. Asp-219 contacts (6S)-NADPHX.

It belongs to the NnrD/CARKD family. In terms of assembly, homotetramer. Requires Mg(2+) as cofactor.

It catalyses the reaction (6S)-NADHX + ADP = AMP + phosphate + NADH + H(+). It carries out the reaction (6S)-NADPHX + ADP = AMP + phosphate + NADPH + H(+). Its function is as follows. Catalyzes the dehydration of the S-form of NAD(P)HX at the expense of ADP, which is converted to AMP. Together with NAD(P)HX epimerase, which catalyzes the epimerization of the S- and R-forms, the enzyme allows the repair of both epimers of NAD(P)HX, a damaged form of NAD(P)H that is a result of enzymatic or heat-dependent hydration. The chain is ADP-dependent (S)-NAD(P)H-hydrate dehydratase from Streptococcus pneumoniae (strain ATCC BAA-255 / R6).